A 111-amino-acid chain; its full sequence is Integration host factor subunit alpha (111 aa).

This sequence belongs to the bacterial histone-like protein family. Heterodimer of an alpha and a beta chain.

This protein is one of the two subunits of integration host factor, a specific DNA-binding protein that functions in genetic recombination as well as in transcriptional and translational control. The polypeptide is Integration host factor subunit alpha (Polaromonas sp. (strain JS666 / ATCC BAA-500)).